Reading from the N-terminus, the 1573-residue chain is Pentafunctional AROM polypeptide 1 (1573 aa).

Positions 1 to 380 are 3-dehydroquinate synthase; sequence MAEPTKISIL…YEPKASVVSN (380 aa). NAD(+) is bound by residues 44-46, 81-84, 112-114, and Asp-117; these read DTN, ENSK, and GGV. 7-phospho-2-dehydro-3-deoxy-D-arabino-heptonate is bound at residue Arg-128. 137-138 is an NAD(+) binding site; it reads TT. Residues Asp-144 and Lys-150 each coordinate 7-phospho-2-dehydro-3-deoxy-D-arabino-heptonate. Lys-159 is a binding site for NAD(+). Asn-160 is a binding site for 7-phospho-2-dehydro-3-deoxy-D-arabino-heptonate. NAD(+)-binding positions include 177–180 and Asn-188; that span reads FIDT. Glu-192 contacts Zn(2+). 7-phospho-2-dehydro-3-deoxy-D-arabino-heptonate-binding positions include 192 to 195 and Lys-246; that span reads EVIK. Residue Glu-256 is the Proton acceptor; for 3-dehydroquinate synthase activity of the active site. Residues 260-264 and His-267 each bind 7-phospho-2-dehydro-3-deoxy-D-arabino-heptonate; that span reads RNLLN. Position 267 (His-267) interacts with Zn(2+). His-271 serves as the catalytic Proton acceptor; for 3-dehydroquinate synthase activity. Positions 283 and 352 each coordinate 7-phospho-2-dehydro-3-deoxy-D-arabino-heptonate. Residue His-283 coordinates Zn(2+). The interval 393-838 is EPSP synthase; sequence VIPGVPKDLN…WDALKQKFGV (446 aa). Cys-820 (for EPSP synthase activity) is an active-site residue. The shikimate kinase stretch occupies residues 859–1051; the sequence is DASIVIIGMR…RRKRLSFFMS (193 aa). 866-873 contacts ATP; that stretch reads GMRGAGKT. Residues 1052–1273 are 3-dehydroquinase; that stretch reads LTLTDLRDSG…AAPGQLSAAE (222 aa). Residue His-1175 is the Proton acceptor; for 3-dehydroquinate dehydratase activity of the active site. The active-site Schiff-base intermediate with substrate; for 3-dehydroquinate dehydratase activity is Lys-1203. The segment at 1286–1573 is shikimate dehydrogenase; the sequence is AKKFAIFGKP…NAVLGTDETK (288 aa).

It in the N-terminal section; belongs to the sugar phosphate cyclases superfamily. Dehydroquinate synthase family. In the 2nd section; belongs to the EPSP synthase family. This sequence in the 3rd section; belongs to the shikimate kinase family. The protein in the 4th section; belongs to the type-I 3-dehydroquinase family. It in the C-terminal section; belongs to the shikimate dehydrogenase family. Homodimer. The cofactor is Zn(2+).

It localises to the cytoplasm. It carries out the reaction 7-phospho-2-dehydro-3-deoxy-D-arabino-heptonate = 3-dehydroquinate + phosphate. It catalyses the reaction 3-dehydroquinate = 3-dehydroshikimate + H2O. The enzyme catalyses shikimate + NADP(+) = 3-dehydroshikimate + NADPH + H(+). The catalysed reaction is shikimate + ATP = 3-phosphoshikimate + ADP + H(+). It carries out the reaction 3-phosphoshikimate + phosphoenolpyruvate = 5-O-(1-carboxyvinyl)-3-phosphoshikimate + phosphate. Its pathway is metabolic intermediate biosynthesis; chorismate biosynthesis; chorismate from D-erythrose 4-phosphate and phosphoenolpyruvate: step 2/7. It participates in metabolic intermediate biosynthesis; chorismate biosynthesis; chorismate from D-erythrose 4-phosphate and phosphoenolpyruvate: step 3/7. The protein operates within metabolic intermediate biosynthesis; chorismate biosynthesis; chorismate from D-erythrose 4-phosphate and phosphoenolpyruvate: step 4/7. It functions in the pathway metabolic intermediate biosynthesis; chorismate biosynthesis; chorismate from D-erythrose 4-phosphate and phosphoenolpyruvate: step 5/7. Its pathway is metabolic intermediate biosynthesis; chorismate biosynthesis; chorismate from D-erythrose 4-phosphate and phosphoenolpyruvate: step 6/7. Functionally, the AROM polypeptide catalyzes 5 consecutive enzymatic reactions in prechorismate polyaromatic amino acid biosynthesis. This Talaromyces marneffei (strain ATCC 18224 / CBS 334.59 / QM 7333) (Penicillium marneffei) protein is Pentafunctional AROM polypeptide 1.